The following is a 370-amino-acid chain: MKSFSLQTRLYSGQGSLDVLKRLTNKHIWIICDGFLARSPLIEKLRDALPADNHISIFSDITPDPTINTVVQGIAQMQSLRPDVVIGFGGGSALDAAKAIVWFSRQFGIEIETCVAIPTTSGTGSEVTSACVISDPDKGIKYPLFNNALYPDMAILDPTLVVSVPPAITANTGMDVLTHALEAYVSTKASDFTDALAEKAAQIVFQYLPVAVSKGDCLATRGKMHNASTLAGMAFSQAGLGINHAIAHQLGGQFHLPHGLANALLLTHVIHFNARDPRAAKRYARFAKACHLCPDNANDTAALNALIRHIELLKKQCALPSFADALKDGKQAWSQRIPSMVQAALADVTLQTNPRVADASAMQELLEELL.

The protein belongs to the iron-containing alcohol dehydrogenase family. Interacts with PduP, probably via the N-terminus of PduQ. Fe cation is required as a cofactor.

It localises to the bacterial microcompartment. It catalyses the reaction 1-propanol + NAD(+) = propanal + NADH + H(+). Its pathway is polyol metabolism; 1,2-propanediol degradation. An iron-dependent alcohol dehydrogenase required for optimal 1,2-propanediol (1,2-PD) degradation. NAD(+) and NADH are regenerated internally within the bacterial microcompartment (BMC) dedicated to 1,2-PD degradation by the PduP and PduQ enzymes, which reduce NAD(+) and oxidize NADH respectively, although there must also be cofactor transport across the BMC. Its function is as follows. Expression of a cosmid containing the full 21-gene pdu operon in E.coli allows E.coli to grow on 1,2-propanediol (1,2-PD) with the appearance of bacterial microcompartments (BMC) in its cytoplasm. In terms of biological role, the 1,2-PD-specific bacterial microcompartment (BMC) concentrates low levels of 1,2-PD catabolic enzymes, concentrates volatile reaction intermediates thus enhancing pathway flux and keeps the level of toxic, mutagenic propionaldehyde low. The chain is 1-propanol dehydrogenase PduQ from Citrobacter freundii.